The chain runs to 849 residues: Cytosolic phospholipase A2 zeta (849 aa).

The 119-residue stretch at 27 to 145 folds into the C2 domain; the sequence is EKRGPLWRHW…KCGQPHKHTF (119 aa). Asp60, Asp66, Asp116, Asp118, and Asp123 together coordinate Ca(2+). One can recognise a PLA2c domain in the interval 306–849; sequence EMSSGDLDLR…RHQARERAGA (544 aa). The Nucleophile role is filled by Ser395. Asp680 serves as the catalytic Proton acceptor.

The cofactor is Ca(2+). As to expression, expressed in myocardium (at protein level).

The protein resides in the cytoplasm. Its subcellular location is the cytosol. The protein localises to the cell membrane. It localises to the mitochondrion. It catalyses the reaction a 1,2-diacyl-sn-glycero-3-phosphocholine + H2O = a 1-acyl-sn-glycero-3-phosphocholine + a fatty acid + H(+). It carries out the reaction a 1-O-alkyl-2-acyl-sn-glycero-3-phosphocholine + H2O = a 1-O-alkyl-sn-glycero-3-phosphocholine + a fatty acid + H(+). The catalysed reaction is 1-hexadecanoyl-2-(9Z-octadecenoyl)-sn-glycero-3-phosphocholine + H2O = 2-(9Z-octadecenoyl)-sn-glycero-3-phosphocholine + hexadecanoate + H(+). The enzyme catalyses 1-hexadecanoyl-2-(9Z,12Z-octadecadienoyl)-sn-glycero-3-phosphocholine + H2O = (9Z,12Z)-octadecadienoate + 1-hexadecanoyl-sn-glycero-3-phosphocholine + H(+). It catalyses the reaction 1-hexadecanoyl-2-(5Z,8Z,11Z,14Z-eicosatetraenoyl)-sn-glycero-3-phosphocholine + H2O = 1-hexadecanoyl-sn-glycero-3-phosphocholine + (5Z,8Z,11Z,14Z)-eicosatetraenoate + H(+). It carries out the reaction 1-hexadecanoyl-2-(9Z,12Z-octadecadienoyl)-sn-glycero-3-phosphoethanolamine + H2O = 1-hexadecanoyl-sn-glycero-3-phosphoethanolamine + (9Z,12Z)-octadecadienoate + H(+). The catalysed reaction is 1-hexadecanoyl-2-(5Z,8Z,11Z,14Z-eicosatetraenoyl)-sn-glycero-3-phosphoethanolamine + H2O = 1-hexadecanoyl-sn-glycero-3-phosphoethanolamine + (5Z,8Z,11Z,14Z)-eicosatetraenoate + H(+). The enzyme catalyses 1-(5Z,8Z,11Z,14Z-eicosatetraenoyl)-2-O-hexadecyl-sn-glycero-3-phosphocholine + H2O = 2-O-hexadecyl-sn-glycero-3-phosphocholine + (5Z,8Z,11Z,14Z)-eicosatetraenoate + H(+). It catalyses the reaction 1-O-hexadecyl-2-(5Z,8Z,11Z,14Z)-eicosatetraenoyl-sn-glycero-3-phosphocholine + H2O = 1-O-hexadecyl-sn-glycero-3-phosphocholine + (5Z,8Z,11Z,14Z)-eicosatetraenoate + H(+). It carries out the reaction 1-hexadecanoyl-sn-glycero-3-phosphocholine + H2O = sn-glycerol 3-phosphocholine + hexadecanoate + H(+). Stimulated by cytosolic Ca(2+). Functionally, has calcium-dependent phospholipase and lysophospholipase activities with a potential role in membrane lipid remodeling and biosynthesis of lipid mediators. Preferentially hydrolyzes the ester bond of the fatty acyl group attached at sn-2 position of phospholipids (phospholipase A2 activity). Selectively hydrolyzes sn-2 arachidonoyl group from membrane phospholipids, providing the precursor for eicosanoid biosynthesis. In myocardial mitochondria, plays a major role in arachidonate release that is metabolically channeled to the formation of cardioprotective eicosanoids, epoxyeicosatrienoates (EETs). The sequence is that of Cytosolic phospholipase A2 zeta (PLA2G4F) from Homo sapiens (Human).